Consider the following 966-residue polypeptide: Catenin alpha-2 (966 aa).

Residues 924 to 940 (PEKKPLVKREKPEEYQT) are compositionally biased toward basic and acidic residues. The segment at 924–952 (PEKKPLVKREKPEEYQTRVRRGSQKKHIS) is disordered. Over residues 941-951 (RVRRGSQKKHI) the composition is skewed to basic residues.

The protein belongs to the vinculin/alpha-catenin family.

The protein localises to the cell membrane. It is found in the cytoplasm. Its subcellular location is the cytoskeleton. The protein resides in the cell junction. It localises to the adherens junction. The protein localises to the cell projection. It is found in the axon. Its subcellular location is the nucleus. Functionally, may function as a linker between cadherin adhesion receptors and the cytoskeleton to regulate cell-cell adhesion and differentiation in the nervous system. This chain is Catenin alpha-2 (ctnna2), found in Xenopus laevis (African clawed frog).